The following is a 238-amino-acid chain: Epoxyqueuosine reductase QueH (238 aa).

Cys-43, Cys-44, Cys-129, and Cys-132 together coordinate [4Fe-4S] cluster. A disulfide bond links Cys-211 and Cys-213.

It belongs to the QueH family.

The catalysed reaction is epoxyqueuosine(34) in tRNA + AH2 = queuosine(34) in tRNA + A + H2O. It functions in the pathway tRNA modification; tRNA-queuosine biosynthesis. Catalyzes the conversion of epoxyqueuosine (oQ) to queuosine (Q), which is a hypermodified base found in the wobble positions of tRNA(Asp), tRNA(Asn), tRNA(His) and tRNA(Tyr). This is Epoxyqueuosine reductase QueH from Staphylococcus epidermidis (strain ATCC 12228 / FDA PCI 1200).